We begin with the raw amino-acid sequence, 668 residues long: MFDYLENEEVALDELKQMLRDRDPNDTRNQFKNNALHAYLFNEHCNNVEVVKLLLDSGTNPLHKNWRQLTPLGEYTNSRHGKVNKDIAMVLLEATGYSNINDFNIFTYMKSKNVDIDLIKVLVEHGFDFSVKCEKHHSVIENYVMTDDPVPEIIDLFIENGCSVIYEDEDDEYGYAYEEYHSQNDDYQPRNCGTVLHLYIISHLYSESDSRSCVNPEVVKCLINHGINPSSIDKNYCTALQYYIKSSHIDIDIVKLLMKGIDNTAYSYIDDLTCCTRGIMADYLNSDYRYNKDVDLDLVKLFLENGKPHGIMCSIVPLWRNDKETISLILKTMNSDVLQHILIEYITFSDIDISLVEYMLEYGAVVNKEAIHGYFKNINIDSYTMKYLLKKEGGDAVNHLDDGEIPIGHLCKSNYGRYNFYTDTYRQGFRDMSYACPILSTINICLPYLKDINMIDKRGETLLHKAVRYNKQSLVSLLLESGSDVNIRSNNGYTCIAIAINESRNIELLNMLLCHKPTLDCVIDSLREISNIVDNAYAIKQCIRYAMIIDDCISSKIPESISKHYNDYIDICNQELNEMKKIIVGGNTMFSLIFTDHGAKIIHRYANNPELRAYYESKQNKIYVEVYDIISNAIVKHNKIHKNIESVDDNTYISNLPYTIKYKIFEQQ.

9 ANK repeats span residues 31–64 (FKNN…PLHK), 101–131 (NDFN…DFSV), 135–166 (KHHS…SVIY), 199–231 (YIIS…NPSS), 235–266 (NYCT…NTAY), 277–311 (RGIM…PHGI), 334–368 (NSDV…VVNK), 458–487 (RGET…DVNI), and 491–521 (NGYT…TLDC). Residues 586–666 (GNTMFSLIFT…PYTIKYKIFE (81 aa)) are PRANC/F-box-like.

Belongs to the orthopoxvirus OPG023 family. As to quaternary structure, interacts (via N-terminus) with host RELA. Interacts (via PRANC/F-box-like domain) with the SKP1 component of the host SCF ubiquitin ligase complex.

Substrate-specific adapter of SKP1-containing E3 ubiquitin-protein ligases which mediate the ubiquitination and subsequent proteasomal degradation of host target proteins. Prevents activation and subsequent nuclear localization of NF-kappa-B in infected cells, by targeting NF-kappa-B RELA subunit to the SCF E3 ligase complex. The sequence is that of Ankyrin repeat domain-containing protein OPG023 (OPG023) from Bos taurus (Bovine).